Reading from the N-terminus, the 187-residue chain is Nicotinamide-nucleotide adenylyltransferase (187 aa).

This sequence belongs to the archaeal NMN adenylyltransferase family.

It is found in the cytoplasm. The enzyme catalyses beta-nicotinamide D-ribonucleotide + ATP + H(+) = diphosphate + NAD(+). It participates in cofactor biosynthesis; NAD(+) biosynthesis; NAD(+) from nicotinamide D-ribonucleotide: step 1/1. This chain is Nicotinamide-nucleotide adenylyltransferase, found in Thermococcus onnurineus (strain NA1).